Here is a 636-residue protein sequence, read N- to C-terminus: Ubiquitin-activating enzyme E1-like (636 aa).

Residues 28–33, aspartate 52, 60–63, lysine 76, and 121–126 contribute to the ATP site; these read GAGGIG, NLNR, and DNLAAR. Cysteine 162 and cysteine 165 together coordinate Zn(2+). Residue cysteine 177 is the Glycyl thioester intermediate of the active site. Residues cysteine 435 and cysteine 438 each contribute to the Zn(2+) site. A disordered region spans residues 581–636; sequence DGIVILDDDEGEITIDAEPINGSKKRPVDTEISEAPSNKRTKLVNEPTNSDIVELD. Over residues 586-595 the composition is skewed to acidic residues; that stretch reads LDDDEGEITI. A Nuclear localization signal motif is present at residues 619–622; the sequence is KRTK. The span at 626-636 shows a compositional bias: polar residues; that stretch reads EPTNSDIVELD.

It belongs to the ubiquitin-activating E1 family. Heterodimer of UBA2 and AOS1. The complex binds SMT3. Post-translationally, multiubiquitinated in vivo.

It is found in the nucleus. It functions in the pathway protein modification; protein sumoylation. The dimeric enzyme acts as a SMT3 E1 ligase. It mediates ATP-dependent activation of SMT3 and formation of a thioester with a conserved cysteine residue on AOS1. This Saccharomyces cerevisiae (strain ATCC 204508 / S288c) (Baker's yeast) protein is Ubiquitin-activating enzyme E1-like (UBA2).